The chain runs to 173 residues: MALRAVRSVRAAVGGLRAISAPSAPCLPRPWGLRAGAVRELRTGPALLSVRKFTEKHEWVTTENGVGTVGISNFAQEALGDVVYCSLPEVGTKLNKQEEFGALESVKAASELYSPLSGEVTEINKALAENPGLVNKSCYEDGWLIKMTFSNPSELDELMSEEAYEKYIKSIEE.

A mitochondrion-targeting transit peptide spans 1 to 48; the sequence is MALRAVRSVRAAVGGLRAISAPSAPCLPRPWGLRAGAVRELRTGPALL. One can recognise a Lipoyl-binding domain in the interval 66 to 148; the sequence is VGTVGISNFA…YEDGWLIKMT (83 aa). N6-lipoyllysine is present on K107.

The protein belongs to the GcvH family. As to quaternary structure, interacts with GLDC. The glycine cleavage system is composed of four proteins: P (GLDC), T (GCST), L (DLD) and H (GCSH). It depends on (R)-lipoate as a cofactor.

It localises to the mitochondrion. In terms of biological role, the glycine cleavage system catalyzes the degradation of glycine. The H protein (GCSH) shuttles the methylamine group of glycine from the P protein (GLDC) to the T protein (GCST). Has a pivotal role in the lipoylation of enzymes involved in cellular energetics such as the mitochondrial dihydrolipoyllysine-residue acetyltransferase component of pyruvate dehydrogenase complex (DLAT), and the mitochondrial dihydrolipoyllysine-residue succinyltransferase component of 2-oxoglutarate dehydrogenase complex (DLST). In Bos taurus (Bovine), this protein is Glycine cleavage system H protein, mitochondrial.